A 556-amino-acid chain; its full sequence is Glutamine--tRNA ligase (556 aa).

Residues 34 to 44 carry the 'HIGH' region motif; sequence PEPNGFLHIGH. ATP-binding positions include 35–37 and 41–47; these read EPN and HIGHAKA. The L-glutamine site is built by Asp67 and Tyr212. ATP-binding positions include Thr231, 261 to 262, and 269 to 271; these read RL and MSK. The short motif at 268 to 272 is the 'KMSKS' region element; that stretch reads LMSKR.

This sequence belongs to the class-I aminoacyl-tRNA synthetase family. As to quaternary structure, monomer.

The protein localises to the cytoplasm. The enzyme catalyses tRNA(Gln) + L-glutamine + ATP = L-glutaminyl-tRNA(Gln) + AMP + diphosphate. This is Glutamine--tRNA ligase from Colwellia psychrerythraea (strain 34H / ATCC BAA-681) (Vibrio psychroerythus).